Consider the following 561-residue polypeptide: uncharacterized protein (561 aa).

Polar residues predominate over residues 1 to 11; it reads MSQVSLPSQLK. Disordered stretches follow at residues 1–22 and 522–561; these read MSQVSLPSQLKETGPRLQSRCR and CSLPQSSPDPVPDGSPRPKQQPQQAQAEQAQQPQQQIMLP. A compositionally biased stretch (low complexity) spans 541–561; that stretch reads QQPQQAQAEQAQQPQQQIMLP.

To Synechocystis PCC 6803 sll0335 and to M.tuberculosis Rv2567.

This is an uncharacterized protein from Mycobacterium leprae (strain TN).